Reading from the N-terminus, the 150-residue chain is Developmental pluripotency-associated protein 3 (150 aa).

The segment covering 1–22 (MEEPSEKVDPMKDPETPQKKDE) has biased composition (basic and acidic residues). A disordered region spans residues 1–32 (MEEPSEKVDPMKDPETPQKKDEEDALDDTDVL). Residues 1–75 (MEEPSEKVDP…VPVENKSEKI (75 aa)) are required for H3K9me2-binding. Residues 76–150 (RREVQSAFPK…PSENAKIGKN (75 aa)) are required to exclude TET3 from the maternal pronucleus.

As to expression, expressed in the immature oocytes and in newborn ovaries. Subsequently detected in maturing oocytes and in preimplantation embryos. Expressed in pluripotent embryonic but not in differentiated somatic cells. Expressed in blastocysts, epiblasts, primordial germ cells, embryonic gonads and primitive spermatogonia. No expression is detected in adult testes.

It localises to the nucleus. It is found in the cytoplasm. Primordial germ cell (PGCs)-specific protein involved in epigenetic chromatin reprogramming in the zygote following fertilization. In zygotes, DNA demethylation occurs selectively in the paternal pronucleus before the first cell division, while the adjacent maternal pronucleus and certain paternally-imprinted loci are protected from this process. Participates in protection of DNA methylation in the maternal pronucleus by preventing conversion of 5mC to 5hmC: specifically recognizes and binds histone H3 dimethylated at 'Lys-9' (H3K9me2) on maternal genome, and protects maternal genome from TET3-mediated conversion to 5hmC and subsequent DNA demethylation. Does not bind paternal chromatin, which is mainly packed into protamine and does not contain much H3K9me2 mark. Also protects imprinted loci that are marked with H3K9me2 in mature sperm from DNA demethylation in early embryogenesis. May be important for the totipotent/pluripotent states continuing through preimplantation development. Also involved in chromatin condensation in oocytogenesis. The chain is Developmental pluripotency-associated protein 3 (Dppa3) from Mus musculus (Mouse).